Reading from the N-terminus, the 55-residue chain is Large ribosomal subunit protein bL33 (55 aa).

It belongs to the bacterial ribosomal protein bL33 family.

This is Large ribosomal subunit protein bL33 from Pectobacterium carotovorum subsp. carotovorum (strain PC1).